Consider the following 284-residue polypeptide: Bifunctional protein FolD 1 (284 aa).

NADP(+)-binding positions include 166-168 (GAS) and I232.

This sequence belongs to the tetrahydrofolate dehydrogenase/cyclohydrolase family. As to quaternary structure, homodimer.

The enzyme catalyses (6R)-5,10-methylene-5,6,7,8-tetrahydrofolate + NADP(+) = (6R)-5,10-methenyltetrahydrofolate + NADPH. It carries out the reaction (6R)-5,10-methenyltetrahydrofolate + H2O = (6R)-10-formyltetrahydrofolate + H(+). It functions in the pathway one-carbon metabolism; tetrahydrofolate interconversion. Functionally, catalyzes the oxidation of 5,10-methylenetetrahydrofolate to 5,10-methenyltetrahydrofolate and then the hydrolysis of 5,10-methenyltetrahydrofolate to 10-formyltetrahydrofolate. The sequence is that of Bifunctional protein FolD 1 from Pseudomonas syringae pv. syringae (strain B728a).